A 493-amino-acid polypeptide reads, in one-letter code: Cytochrome P450 2A9 (493 aa).

Cys-438 lines the heme pocket.

The protein belongs to the cytochrome P450 family. Requires heme as cofactor. In terms of tissue distribution, liver.

The protein localises to the endoplasmic reticulum membrane. Its subcellular location is the microsome membrane. The catalysed reaction is an organic molecule + reduced [NADPH--hemoprotein reductase] + O2 = an alcohol + oxidized [NADPH--hemoprotein reductase] + H2O + H(+). Functionally, cytochromes P450 are a group of heme-thiolate monooxygenases. In liver microsomes, this enzyme is involved in an NADPH-dependent electron transport pathway. It oxidizes a variety of structurally unrelated compounds, including steroids, fatty acids, and xenobiotics. In Mesocricetus auratus (Golden hamster), this protein is Cytochrome P450 2A9 (CYP2A9).